A 550-amino-acid chain; its full sequence is MFCVQCEQTIRTPAGNGCSYAQGMCGKTAETSDLQDLLIAALQGLSAWAVKAREYGIINHDVDSFAPRAFFSTLTNVNFDSPRIVGYAREAIALREALKAQCLAVDANARVDNPMADLQLVSDDLGELQRQAAEFTPNKDKAAIGENILGLRLLCLYGLKGAAAYMEHAHVLGQYDNDIYAQYHKIMAWLGTWPADMNALLECSMEIGQMNFKVMSILDAGETSKYGHPTPTQVNVKATAGKCILISGHDLKDLYNLLEQTEGTGVNVYTHGEMLPAHGYPELRKFKHLVGNYGSGWQNQQVEFARFPGPIVMTSNCIIDPTVGAYDDRIWTRSIVGWPGVRHLDGEDFSAVIAQAQQMAGFPYSEIPHLITVGFGRQTLLGAADTLIDLVSREKLRHIFLLGGCDGARGERHYFTDFATSVPDDCLILTLACGKYRFNKLEFGDIEGLPRLVDAGQCNDAYSAIILAVTLAEKLGCGVNDLPLSLVLSWFEQKAIVILLTLLSLGVKNIVTGPTAPGFLTPDLLAVLNEKFGLRSITTVEEDMKQLLSA.

The [2Fe-2S] cluster site is built by Cys-3, Cys-6, Cys-18, and Cys-25. Hybrid [4Fe-2O-2S] cluster is bound by residues His-249, Glu-273, Cys-317, Cys-405, Cys-433, Cys-458, Glu-492, and Lys-494. Cysteine persulfide is present on Cys-405.

The protein belongs to the HCP family. [2Fe-2S] cluster is required as a cofactor. It depends on hybrid [4Fe-2O-2S] cluster as a cofactor.

The protein localises to the cytoplasm. It catalyses the reaction A + NH4(+) + H2O = hydroxylamine + AH2 + H(+). Its function is as follows. Catalyzes the reduction of hydroxylamine to form NH(3) and H(2)O. This is Hydroxylamine reductase from Escherichia coli O7:K1 (strain IAI39 / ExPEC).